The sequence spans 350 residues: Probable arabinogalactan endo-beta-1,4-galactanase A (350 aa).

An N-terminal signal peptide occupies residues 1-16; the sequence is MIYSLLLSALPLLSSA. The N-linked (GlcNAc...) asparagine glycan is linked to Asn128. The active-site Proton donor is Glu152. Catalysis depends on Glu262, which acts as the Nucleophile.

This sequence belongs to the glycosyl hydrolase 53 family.

The protein resides in the secreted. It carries out the reaction The enzyme specifically hydrolyzes (1-&gt;4)-beta-D-galactosidic linkages in type I arabinogalactans.. In terms of biological role, endogalactanase involved in the degradation of plant cell wall polysaccharides, and more particularly of hairy regions of pectin. This is Probable arabinogalactan endo-beta-1,4-galactanase A (galA) from Aspergillus niger (strain ATCC MYA-4892 / CBS 513.88 / FGSC A1513).